A 147-amino-acid polypeptide reads, in one-letter code: TRAF-interacting protein with FHA domain-containing protein B (147 aa).

Residues Leu-36–Ser-108 enclose the FHA domain.

As to quaternary structure, interacts with TIFA. In terms of tissue distribution, expressed at high levels in spleen and at moderate levels in lung, thymus, and small intestine.

Its function is as follows. Inhibits TIFA-mediated TRAF6 activation possibly by inducing a conformational change in TIFA. The polypeptide is TRAF-interacting protein with FHA domain-containing protein B (Mus musculus (Mouse)).